A 341-amino-acid polypeptide reads, in one-letter code: Cyclic GMP-AMP synthase (341 aa).

Ser-56 provides a ligand contact to ATP. Catalysis depends on residues Asp-71 and Asp-73. Position 73 (Asp-73) interacts with Mg(2+). Asn-109 provides a ligand contact to ATP. Residue Asp-123 is part of the active site. Asp-123 is a binding site for Mg(2+). Positions 192 and 238 each coordinate ATP.

This sequence belongs to the CD-NTase family. B04 subfamily. Monomer. Requires Mg(2+) as cofactor.

It catalyses the reaction GTP + ATP = 3',3'-cGAMP + 2 diphosphate. Cyclic nucleotide synthase (second messenger synthase) of a CBASS antivirus system. CBASS (cyclic oligonucleotide-based antiphage signaling system) provides immunity against bacteriophage. The CD-NTase protein synthesizes cyclic nucleotides in response to infection; these serve as specific second messenger signals. The signals activate a diverse range of effectors, leading to bacterial cell death and thus abortive phage infection. A type II-A(GA) CBASS system. In terms of biological role, catalyzes the synthesis of 3'3'-cyclic GMP-AMP (3'3'-cGAMP) from GTP and ATP, a second messenger in cell signal transduction. May make another product. Controls the activity of the CBASS cGAMP-activated phospholipase effector protein. The protein is Cyclic GMP-AMP synthase of Bacteroides fragilis.